The chain runs to 219 residues: N-(5'-phosphoribosyl)anthranilate isomerase (219 aa).

It belongs to the TrpF family.

It catalyses the reaction N-(5-phospho-beta-D-ribosyl)anthranilate = 1-(2-carboxyphenylamino)-1-deoxy-D-ribulose 5-phosphate. It functions in the pathway amino-acid biosynthesis; L-tryptophan biosynthesis; L-tryptophan from chorismate: step 3/5. This Dehalococcoides mccartyi (strain ATCC BAA-2266 / KCTC 15142 / 195) (Dehalococcoides ethenogenes (strain 195)) protein is N-(5'-phosphoribosyl)anthranilate isomerase.